Here is a 933-residue protein sequence, read N- to C-terminus: MSLVSQNSRRRRGGRANGRKNSGKGRPAAVPGPAVPRDRSDPQILQGLGATEGPGTSVLPTPRGGSSTSVPPTASEGSSAPGQLITSEGRNTSQLPTSRKGRGTRRPPAVSAGLNAAASITASEGASTPVLPTAPKGSKASEHLTISEGASISEQPQSHEGPNVQPTLGEGSGTSVPPTFSEESGISEPLPSGEGLSISVSPTISEGAGINEPSPASKAPSTSVPPTASNGLGINLPPTSSEGLSISVLFSASEESDISVPPPSAEGLSTSMPPPSGEVQSTWVPPIILEGCSVKVRSTSRKGRRTPVRSAACESPSPSAECLSTSLSSISAEGFCSSLAPCAEGSDTCELLPCGEGPSTSGLHDLEEESSISQMPLAAEGPSASGSSIEDENPEEALSCGASVGMNLCKCTSLALQKADDPSVRPKRAEGFLDFQVLRDSENSNSITIMGLGTAHVALTLKPQDPMEQNVAELLQFLLLKDQTKYPIKESEMREFIVQEYRNQFPEILRRAAAHLECIFRFELKELDPEEHTYILLNKLGPVPFEGLEDIPNGPKMGLLMMILGQIFLNGNQAREADIWEMLWRFGVQRERRLSVFGNPKRLLSVEFVWQRYLDYRPITDCVPVEYEFYWGPRSHVETTKMKILKFMARIYNKDPMDWPAQYNEALEEEAERDVPNNWRAVPHFRRPLFQEVSPELLASDSDAPGCPSKYSPHSWPESRLESKSRKLVQLFLLMDSTKLPIPKKGILYYIGRECSKVFPDLLNRAARTLNHVYGTELVVLDPRNHSYTLYNRREMEDMEEIMDSPNRPGNNFLMQVLSFIFIMGNHARESAVWAFLRGLGVQNGRKHVITCRYLSQRYIDSLRVPDSDPVQYDFVWGPRARLETSKMKALRYVARIHRKEPQDWPDQYREALEDEANRAEAGRRPLVVRNLR.

4 disordered regions span residues 1 to 113 (MSLV…VSAG), 149 to 236 (GASI…GINL), 256 to 282 (SDIS…VQST), and 360 to 393 (TSGL…EDEN). The segment covering 8–23 (SRRRRGGRANGRKNSG) has biased composition (basic residues). Composition is skewed to polar residues over residues 64–97 (GGSS…QLPT), 149–166 (GASI…NVQP), 173–184 (GTSVPPTFSEES), and 219–236 (APST…GINL). 2 MAGE domains span residues 467 to 666 (MEQN…YNEA) and 721 to 912 (LESK…YREA). The segment at 719-933 (SRLESKSRKL…RRPLVVRNLR (215 aa)) is interaction with DTNA.

Interacts with DTNA. Interacts with TRIM28.

The protein resides in the cytoplasm. The protein localises to the perinuclear region. It is found in the nucleus. It localises to the cell membrane. May enhance ubiquitin ligase activity of RING-type zinc finger-containing E3 ubiquitin-protein ligases. Proposed to act through recruitment and/or stabilization of the Ubl-conjugating enzyme (E2) at the E3:substrate complex. The protein is Melanoma-associated antigen E1 (Magee1) of Rattus norvegicus (Rat).